We begin with the raw amino-acid sequence, 201 residues long: Dephospho-CoA kinase (201 aa).

One can recognise a DPCK domain in the interval 4–201; the sequence is SVGLTGNIAS…KYLREAKIKQ (198 aa). Residue 12–17 coordinates ATP; sequence ASGKST.

The protein belongs to the CoaE family.

It is found in the cytoplasm. It catalyses the reaction 3'-dephospho-CoA + ATP = ADP + CoA + H(+). It participates in cofactor biosynthesis; coenzyme A biosynthesis; CoA from (R)-pantothenate: step 5/5. Catalyzes the phosphorylation of the 3'-hydroxyl group of dephosphocoenzyme A to form coenzyme A. The polypeptide is Dephospho-CoA kinase (Legionella pneumophila subsp. pneumophila (strain Philadelphia 1 / ATCC 33152 / DSM 7513)).